The following is a 186-amino-acid chain: MKTAQELRAGNVFMVGNDPMVVQKTEYIKGGRSSAKVSMKLKNLLTGAASETIYKADDKFDVVILSRKNCTYSYFADPMYVFMDEEFNQYEIEADNIGDALKFIVDGMEDQCEVTFYEGNPISVELPTIIVREVEYTEPAVKGDTSGKVMKTARLVGGTEIQVMSYIENGDKVEIDTRTGEFRKRA.

This sequence belongs to the elongation factor P family.

The protein localises to the cytoplasm. It functions in the pathway protein biosynthesis; polypeptide chain elongation. Functionally, involved in peptide bond synthesis. Stimulates efficient translation and peptide-bond synthesis on native or reconstituted 70S ribosomes in vitro. Probably functions indirectly by altering the affinity of the ribosome for aminoacyl-tRNA, thus increasing their reactivity as acceptors for peptidyl transferase. This chain is Elongation factor P, found in Neisseria gonorrhoeae (strain ATCC 700825 / FA 1090).